An 84-amino-acid polypeptide reads, in one-letter code: Small ribosomal subunit protein bS16 (84 aa).

This sequence belongs to the bacterial ribosomal protein bS16 family.

This chain is Small ribosomal subunit protein bS16, found in Burkholderia ambifaria (strain MC40-6).